Here is a 294-residue protein sequence, read N- to C-terminus: Nucleotide-binding protein Swol_0262 (294 aa).

15–22 (GLSGAGKT) serves as a coordination point for ATP. 65-68 (DVRG) is a GTP binding site.

The protein belongs to the RapZ-like family.

In terms of biological role, displays ATPase and GTPase activities. The chain is Nucleotide-binding protein Swol_0262 from Syntrophomonas wolfei subsp. wolfei (strain DSM 2245B / Goettingen).